Consider the following 224-residue polypeptide: Charged multivesicular body protein 4b (224 aa).

The disordered stretch occupies residues methionine 1–glutamine 23. Serine 2 is modified (N-acetylserine). The intramolecular interaction with C-terminus stretch occupies residues serine 2 to valine 153. Lysine 6 carries the post-translational modification N6-acetyllysine. Gly residues predominate over residues phenylalanine 8–glycine 19. A coiled-coil region spans residues glutamine 23–isoleucine 183. Position 114 is an N6-acetyllysine (lysine 114). The interval glycine 154–methionine 224 is intramolecular interaction with N-terminus. 2 positions are modified to phosphoserine: serine 184 and serine 223. Residues glycine 185–methionine 224 form a disordered region.

This sequence belongs to the SNF7 family. As to quaternary structure, probable core component of the endosomal sorting required for transport complex III (ESCRT-III). ESCRT-III components are thought to multimerize to form a flat lattice on the perimeter membrane of the endosome. Several assembly forms of ESCRT-III may exist that interact and act sequentially. Interacts with CHMP6 and CHMP4C. Interacts with PDCD6IP; the interaction is direct. Interacts with VPS4A; the interaction is direct. Interacts with VPS4B; the interaction is direct. Interacts with CHMP7. Interacts with CFTR; the interaction requires misfolded CFTR. Interacts with PTPN23. Interacts with CC2D1B. In terms of processing, ISGylated. Isgylation weakens its interaction with VPS4A.

Its subcellular location is the cytoplasm. The protein localises to the cytosol. It localises to the late endosome membrane. It is found in the midbody. The protein resides in the nucleus envelope. Probable core component of the endosomal sorting required for transport complex III (ESCRT-III) which is involved in multivesicular bodies (MVBs) formation and sorting of endosomal cargo proteins into MVBs. MVBs contain intraluminal vesicles (ILVs) that are generated by invagination and scission from the limiting membrane of the endosome and mostly are delivered to lysosomes enabling degradation of membrane proteins, such as stimulated growth factor receptors, lysosomal enzymes and lipids. The MVB pathway appears to require the sequential function of ESCRT-O, -I,-II and -III complexes. ESCRT-III proteins mostly dissociate from the invaginating membrane before the ILV is released. The ESCRT machinery also functions in topologically equivalent membrane fission events, such as the terminal stages of cytokinesis. Together with SPAST, the ESCRT-III complex promotes nuclear envelope sealing and mitotic spindle disassembly during late anaphase. Plays a role in the endosomal sorting pathway. ESCRT-III proteins are believed to mediate the necessary vesicle extrusion and/or membrane fission activities, possibly in conjunction with the AAA ATPase VPS4. When overexpressed, membrane-assembled circular arrays of CHMP4B filaments can promote or stabilize negative curvature and outward budding. CHMP4A/B/C are required for the exosomal release of SDCBP, CD63 and syndecan. Majority of the protein exists in a folded closed conformation. The sequence is that of Charged multivesicular body protein 4b (Chmp4b) from Mus musculus (Mouse).